A 289-amino-acid chain; its full sequence is ATP synthase gamma chain (289 aa).

It belongs to the ATPase gamma chain family. F-type ATPases have 2 components, CF(1) - the catalytic core - and CF(0) - the membrane proton channel. CF(1) has five subunits: alpha(3), beta(3), gamma(1), delta(1), epsilon(1). CF(0) has three main subunits: a, b and c.

It localises to the cell inner membrane. In terms of biological role, produces ATP from ADP in the presence of a proton gradient across the membrane. The gamma chain is believed to be important in regulating ATPase activity and the flow of protons through the CF(0) complex. This is ATP synthase gamma chain from Haemophilus influenzae (strain PittGG).